The sequence spans 120 residues: Protein FAM241B (120 aa).

Residues 12 to 59 are disordered; the sequence is QDDDPRVRTTTQHRSSSSQQGFFNRGHGAPPGGPGPRQQQAGARLGAA. Composition is skewed to low complexity over residues 19 to 39 and 47 to 59; these read RTTT…RGHG and PRQQ…LGAA. Phosphoserine is present on Ser61. A helical membrane pass occupies residues 91–111; it reads ILLLFLLMMLGVRGLLLVGLV.

The protein belongs to the FAM241 family.

The protein localises to the membrane. In terms of biological role, may play a role in lysosome homeostasis. This chain is Protein FAM241B, found in Mus musculus (Mouse).